Consider the following 268-residue polypeptide: Transcription initiation factor TFIID subunit 14b (268 aa).

The segment covering 1–20 has biased composition (polar residues); the sequence is MTNSSSSKKQAQDQPETSEP. The interval 1–36 is disordered; it reads MTNSSSSKKQAQDQPETSEPTLKSLKTKMTKSDEKQ. The region spanning 38–182 is the YEATS domain; it reads KLKDIEISVP…ESFLARVQNH (145 aa). Residues 229–263 are a coiled coil; that stretch reads DELLQLAAARQQVQAHIAKLRRQISLLEGQNQTVK.

It belongs to the YAF9 family. In terms of assembly, component of the TFIID complex. TFIID is composed of TATA binding protein (TBP) and a number of TBP-associated factors (TAFs) whose MWs range from 14-217 kDa. Interacts with TAF1, TAF4B and TAF12B. Component of the SWR1 chromatin-remodeling complex. Interacts with FLX, a component of the transcription activator complex FRI-C. Interacts with SWC4, and with EAF1A and EAF1B (via HSA domain). In terms of tissue distribution, expressed in roots, leaves, inflorescence and flowering tissues.

It localises to the cytoplasm. It is found in the nucleus. In terms of biological role, negative regulator of flowering controlling the H4K5 acetylation levels in the FLC and FT chromatin. Positively regulates FLC expression. Component of the transcription factor IID (TFIID) complex that is essential for mediating regulation of RNA polymerase transcription. Component of the SWR1 complex which mediates the ATP-dependent exchange of histone H2A for the H2A variant HZT1 leading to transcriptional regulation of selected genes by chromatin remodeling. Component of a NuA4 histone acetyltransferase complex which is involved in transcriptional activation of selected genes principally by acetylation of nucleosomal histones H4 and H2A. The chain is Transcription initiation factor TFIID subunit 14b from Arabidopsis thaliana (Mouse-ear cress).